We begin with the raw amino-acid sequence, 154 residues long: Lipoprotein signal peptidase (154 aa).

2 consecutive transmembrane segments (helical) span residues 52 to 72 and 85 to 105; these read ILAG…IGIV and LGVA…DRAV. Residues D111 and D129 contribute to the active site. Residues 124-144 form a helical membrane-spanning segment; it reads IFNIADSSLCVGVMLLFIQML.

Belongs to the peptidase A8 family.

It is found in the cell membrane. It carries out the reaction Release of signal peptides from bacterial membrane prolipoproteins. Hydrolyzes -Xaa-Yaa-Zaa-|-(S,diacylglyceryl)Cys-, in which Xaa is hydrophobic (preferably Leu), and Yaa (Ala or Ser) and Zaa (Gly or Ala) have small, neutral side chains.. The protein operates within protein modification; lipoprotein biosynthesis (signal peptide cleavage). Functionally, this protein specifically catalyzes the removal of signal peptides from prolipoproteins. The protein is Lipoprotein signal peptidase of Bacillus subtilis (strain 168).